A 189-amino-acid polypeptide reads, in one-letter code: Holliday junction branch migration complex subunit RuvA (189 aa).

The segment at 1 to 62 (MIVALKGNIE…EEAWSLYGFA (62 aa)) is domain I. The segment at 63–138 (EEAEKRVFDT…FSLSLQEGSK (76 aa)) is domain II. Residues 138–139 (KA) are flexible linker. Residues 140-189 (STPPVFEESRLALESLGFKSELIAKALQNIQATTTQEIIKEALKKLQTLR) form a domain III region.

Belongs to the RuvA family. Homotetramer. Forms an RuvA(8)-RuvB(12)-Holliday junction (HJ) complex. HJ DNA is sandwiched between 2 RuvA tetramers; dsDNA enters through RuvA and exits via RuvB. An RuvB hexamer assembles on each DNA strand where it exits the tetramer. Each RuvB hexamer is contacted by two RuvA subunits (via domain III) on 2 adjacent RuvB subunits; this complex drives branch migration. In the full resolvosome a probable DNA-RuvA(4)-RuvB(12)-RuvC(2) complex forms which resolves the HJ.

The protein resides in the cytoplasm. The RuvA-RuvB-RuvC complex processes Holliday junction (HJ) DNA during genetic recombination and DNA repair, while the RuvA-RuvB complex plays an important role in the rescue of blocked DNA replication forks via replication fork reversal (RFR). RuvA specifically binds to HJ cruciform DNA, conferring on it an open structure. The RuvB hexamer acts as an ATP-dependent pump, pulling dsDNA into and through the RuvAB complex. HJ branch migration allows RuvC to scan DNA until it finds its consensus sequence, where it cleaves and resolves the cruciform DNA. The protein is Holliday junction branch migration complex subunit RuvA of Wolinella succinogenes (strain ATCC 29543 / DSM 1740 / CCUG 13145 / JCM 31913 / LMG 7466 / NCTC 11488 / FDC 602W) (Vibrio succinogenes).